Here is a 428-residue protein sequence, read N- to C-terminus: tRNA(Ile)-lysidine synthase (428 aa).

28–33 contributes to the ATP binding site; the sequence is SGGVDS.

It belongs to the tRNA(Ile)-lysidine synthase family.

It localises to the cytoplasm. The enzyme catalyses cytidine(34) in tRNA(Ile2) + L-lysine + ATP = lysidine(34) in tRNA(Ile2) + AMP + diphosphate + H(+). Its function is as follows. Ligates lysine onto the cytidine present at position 34 of the AUA codon-specific tRNA(Ile) that contains the anticodon CAU, in an ATP-dependent manner. Cytidine is converted to lysidine, thus changing the amino acid specificity of the tRNA from methionine to isoleucine. The sequence is that of tRNA(Ile)-lysidine synthase from Streptococcus pyogenes serotype M6 (strain ATCC BAA-946 / MGAS10394).